A 213-amino-acid chain; its full sequence is Lysozyme g-like protein 2 (213 aa).

The N-terminal stretch at 1-19 is a signal peptide; sequence MVPSVVFWGLIALVGTAKG. 2 disulfide bridges follow: Cys40/Cys93 and Cys54/Cys62. Glu106 is an active-site residue.

It belongs to the glycosyl hydrolase 23 family.

The protein resides in the secreted. May act as a potent antibacterial protein that may play a role in the innate immunity. In Mus musculus (Mouse), this protein is Lysozyme g-like protein 2 (Lyg2).